Reading from the N-terminus, the 154-residue chain is Protein X (154 aa).

Residues 68 to 117 (PCALRFTSARRMETTVNAHQILPKVLHKRTLGLPAMSTTDLEAYFKDCVF) are mitochondrial targeting sequence.

This sequence belongs to the orthohepadnavirus protein X family. In terms of assembly, may form homodimer. May interact with host CEBPA, CFLAR, CREB1, DDB1, E4F1, HBXIP, HSPD1/HSP60, NFKBIA, POLR2E and SMAD4. Interacts with host SMC5-SMC6 complex and induces its degradation. Interacts with host TRPC4AP; leading to prevent ubiquitination of TRPC4AP. Interacts with host PLSCR1; this interaction promotes ubiquitination and degradation of HBx and impairs HBx-mediated cell proliferation. In terms of processing, a fraction may be phosphorylated in insect cells and HepG2 cells, a human hepatoblastoma cell line. Phosphorylated in vitro by host protein kinase C or mitogen-activated protein kinase. N-acetylated in insect cells.

Its subcellular location is the host cytoplasm. It localises to the host nucleus. It is found in the host mitochondrion. Its function is as follows. Multifunctional protein that plays a role in silencing host antiviral defenses and promoting viral transcription. Does not seem to be essential for HBV infection. May be directly involved in development of cirrhosis and liver cancer (hepatocellular carcinoma). Most of cytosolic activities involve modulation of cytosolic calcium. The effect on apoptosis is controversial depending on the cell types in which the studies have been conducted. May induce apoptosis by localizing in mitochondria and causing loss of mitochondrial membrane potential. May also modulate apoptosis by binding host CFLAR, a key regulator of the death-inducing signaling complex (DISC). Promotes viral transcription by using the host E3 ubiquitin ligase DDB1 to target the SMC5-SMC6 complex to proteasomal degradation. This host complex would otherwise bind to viral episomal DNA, and prevents its transcription. Moderately stimulates transcription of many different viral and cellular transcription elements. Promoters and enhancers stimulated by HBx contain DNA binding sites for NF-kappa-B, AP-1, AP-2, c-EBP, ATF/CREB, or the calcium-activated factor NF-AT. The polypeptide is Protein X (Homo sapiens (Human)).